The primary structure comprises 281 residues: NAD kinase (281 aa).

Aspartate 61 functions as the Proton acceptor in the catalytic mechanism. NAD(+) contacts are provided by residues aspartate 61–glycine 62, asparagine 134–aspartate 135, arginine 145, aspartate 164, threonine 175–serine 180, and glutamine 234.

This sequence belongs to the NAD kinase family. A divalent metal cation serves as cofactor.

It localises to the cytoplasm. It carries out the reaction NAD(+) + ATP = ADP + NADP(+) + H(+). Involved in the regulation of the intracellular balance of NAD and NADP, and is a key enzyme in the biosynthesis of NADP. Catalyzes specifically the phosphorylation on 2'-hydroxyl of the adenosine moiety of NAD to yield NADP. This chain is NAD kinase, found in Clostridium botulinum (strain Kyoto / Type A2).